The primary structure comprises 1131 residues: MLHVSASKGMTEYFKNILDDVSNLYNLAEECRKNGYDVTDHVEIPLAKDMADRVEGIVGPKNVAERIRELVSEFGKEPAALEIAKEIVEGKFGEFGREVGAEQAVRTALAVITEGIVAAPLEGIAYVKIKKNSDNSEYLAIYFAGPIRSAGGTAQALAVLVGDYVRKNMGLDRFKPTEDEVERYGEEVDLYQSEVTTFQYQPKAEEIRVAVRNISVEITGEATDDVEVSGHRDLPRVETNQIRGGALLALVEGVLLKAPKILRHVDKLNIEGWNWLKELKSKKEEVIEELEEENDEYNYEDEEDLSQYEDYEVEAVTKFIGEVIAGRPVFSHPSKKGGFRLRYGRSRNTGFATDGFHPAIMYLVDDFMAVGTQLKTERPGKATCVVPVDSIEGPIVKLNDGSVLKIDTVEKAKQYTDEVQEILFLGDILVNYGDFLENNHTVLPSSWCTEWYEKILKSQNLEYTEEFIKNPGQKEAVNYAKITKTPLHPKYTYFWHDISKENISTLRSWVIGGKYNPSNDSWELNYDPEDEEISNAKRYLELIGCPHIVMEEKVEIFEYYPFLYSLGYDFDEKRDMIDNIDEKLQNTKNNMHFINTIAPFEIRRNAYIYVGARMGRPEKAAARKMKPPVNGLFPIGNAGALVRLINKAVDEGKTDEIEIANVKCSCGKVSLYRTCPFCGNSVEPTGPSRIKLPIKDYWYKTLENLKINKPGDVKCIKGMTSKDKIIEPLEKAILRAKNNIYVFKDGTTRFDCTDVPVTHFKPVEIHVPIEKLKSLGYLKDIHGNPLENEDQVLELKVQDVIVPESCMDYFLNVSGFIDDLLEKYYKKDRFYNVNTREDLVGHLIIGMAPHTSAGMVGRIIGYSNANVGYAHPYFHASKRRNCDGDEDAFFLLLDAFMNFSKRFLPDKRGGQMDAPLVLTTILDPKEVDGEVHNMDSMWEYPLEFYEKSLEGIAPKEIKKMMETIEDRLDKDSQYEGIGYTHETSKIDEGPPICAYKTLGSMMEKTSAQLAVAKKIRATDERDVAEKVIQSHFVPDLIGNLRAFSRQGVRCKCGAKYRRMPLKGVCRKCGSRLILTVSKGAVEKYMNVSQTMAEKYDASDYIKQRLEIIKSGIDSLFVNDKRKQVKIEDFFK.

Belongs to the archaeal DNA polymerase II family. In terms of assembly, heterodimer of a large subunit and a small subunit.

The catalysed reaction is DNA(n) + a 2'-deoxyribonucleoside 5'-triphosphate = DNA(n+1) + diphosphate. It catalyses the reaction Exonucleolytic cleavage in the 3'- to 5'-direction to yield nucleoside 5'-phosphates.. In terms of biological role, possesses two activities: a DNA synthesis (polymerase) and an exonucleolytic activity that degrades single-stranded DNA in the 3'- to 5'-direction. Has a template-primer preference which is characteristic of a replicative DNA polymerase. The sequence is that of DNA polymerase II large subunit from Methanococcus maripaludis (strain DSM 14266 / JCM 13030 / NBRC 101832 / S2 / LL).